Reading from the N-terminus, the 197-residue chain is MIALLRGLVVEKHPNQVLVETGGVGYDVTIPVSTFTKLPDLGGEVRLRIYTHVREDVLALYGFLTQDEKALFEKLISVSGIGPTLAVKILSGLAAADLILSIRRGEVEKLVKVPGVGKKTAERMVLELRDKLPAATGEEPGAPAAEALSPIDQDVLSALLNLGCARPQAEAAVRKAKAAGASLDFEPLFRRALELVR.

Residues 1 to 64 (MIALLRGLVV…EDVLALYGFL (64 aa)) are domain I. The domain II stretch occupies residues 65 to 143 (TQDEKALFEK…AATGEEPGAP (79 aa)). The flexible linker stretch occupies residues 144 to 153 (AAEALSPIDQ). The domain III stretch occupies residues 153–197 (QDVLSALLNLGCARPQAEAAVRKAKAAGASLDFEPLFRRALELVR).

The protein belongs to the RuvA family. As to quaternary structure, homotetramer. Forms an RuvA(8)-RuvB(12)-Holliday junction (HJ) complex. HJ DNA is sandwiched between 2 RuvA tetramers; dsDNA enters through RuvA and exits via RuvB. An RuvB hexamer assembles on each DNA strand where it exits the tetramer. Each RuvB hexamer is contacted by two RuvA subunits (via domain III) on 2 adjacent RuvB subunits; this complex drives branch migration. In the full resolvosome a probable DNA-RuvA(4)-RuvB(12)-RuvC(2) complex forms which resolves the HJ.

The protein localises to the cytoplasm. In terms of biological role, the RuvA-RuvB-RuvC complex processes Holliday junction (HJ) DNA during genetic recombination and DNA repair, while the RuvA-RuvB complex plays an important role in the rescue of blocked DNA replication forks via replication fork reversal (RFR). RuvA specifically binds to HJ cruciform DNA, conferring on it an open structure. The RuvB hexamer acts as an ATP-dependent pump, pulling dsDNA into and through the RuvAB complex. HJ branch migration allows RuvC to scan DNA until it finds its consensus sequence, where it cleaves and resolves the cruciform DNA. This chain is Holliday junction branch migration complex subunit RuvA, found in Solibacter usitatus (strain Ellin6076).